A 162-amino-acid chain; its full sequence is Succinate dehydrogenase assembly factor 2, mitochondrial (162 aa).

A mitochondrion-targeting transit peptide spans 1 to 35; sequence MHNMFPALTKTLSLQGYKIINSQTGSAAWSCGRRW.

The protein belongs to the SDHAF2 family. As to quaternary structure, interacts with SDH1 within the SDH catalytic dimer.

The protein resides in the mitochondrion matrix. Its function is as follows. Plays an essential role in the assembly of succinate dehydrogenase (SDH), an enzyme complex (also referred to as respiratory complex II) that is a component of both the tricarboxylic acid (TCA) cycle and the mitochondrial electron transport chain, and which couples the oxidation of succinate to fumarate with the reduction of ubiquinone (coenzyme Q) to ubiquinol. Required for flavinylation (covalent attachment of FAD) of the flavoprotein subunit SDH1 of the SDH catalytic dimer. It is unclear whether it participates in the chemistry of FAD attachment (enzymatic function) or acts as a chaperone that maintains SDH1 in a conformation that is susceptible to autocatalytic FAD attachment. Does not bind FAD or FADH(2) in vitro. Involved in sporulation. Required for the full activation of the early meiotic inducer IME1. The sequence is that of Succinate dehydrogenase assembly factor 2, mitochondrial from Saccharomyces cerevisiae (strain ATCC 204508 / S288c) (Baker's yeast).